The chain runs to 261 residues: Thiazole synthase (261 aa).

The active-site Schiff-base intermediate with DXP is the Lys95. 1-deoxy-D-xylulose 5-phosphate is bound by residues Gly156, 182–183 (AG), and 204–205 (NT).

The protein belongs to the ThiG family. As to quaternary structure, homotetramer. Forms heterodimers with either ThiH or ThiS.

The protein localises to the cytoplasm. The catalysed reaction is [ThiS sulfur-carrier protein]-C-terminal-Gly-aminoethanethioate + 2-iminoacetate + 1-deoxy-D-xylulose 5-phosphate = [ThiS sulfur-carrier protein]-C-terminal Gly-Gly + 2-[(2R,5Z)-2-carboxy-4-methylthiazol-5(2H)-ylidene]ethyl phosphate + 2 H2O + H(+). It functions in the pathway cofactor biosynthesis; thiamine diphosphate biosynthesis. Catalyzes the rearrangement of 1-deoxy-D-xylulose 5-phosphate (DXP) to produce the thiazole phosphate moiety of thiamine. Sulfur is provided by the thiocarboxylate moiety of the carrier protein ThiS. In vitro, sulfur can be provided by H(2)S. The chain is Thiazole synthase from Pectobacterium atrosepticum (strain SCRI 1043 / ATCC BAA-672) (Erwinia carotovora subsp. atroseptica).